Here is a 689-residue protein sequence, read N- to C-terminus: Protein asunder (689 aa).

Residues 521-550 are a coiled coil; sequence NGARLKLSKAKDQYRLLYRELEQLIQLNAT. 2 disordered regions span residues 592–619 and 665–689; these read PERL…SKRR and GTKD…SVRS. Residues 599 to 614 are compositionally biased toward low complexity; sequence SSVGASGSSSSNSLLK. Positions 613 to 619 match the Nuclear localization signal (NLS) motif; it reads LKASKRR.

The protein belongs to the Integrator subunit 13 family. Belongs to the multiprotein complex Integrator, at least composed of IntS1, IntS2, IntS3, IntS4, omd/IntS5, IntS6, defl/IntS7, IntS8, IntS9, IntS10, IntS11, IntS12, asun/IntS13, IntS14 and IntS15. The core complex associates with protein phosphatase 2A subunits mts/PP2A and Pp2A-29B, to form the Integrator-PP2A (INTAC) complex. Phosphorylated. Expressed in nurse cells at stages 9-10 of oogenesis and exported to the oocyte. Also expressed in the follicle cells surrounding the oocyte.

The protein resides in the nucleus. Its subcellular location is the cytoplasm. It is found in the perinuclear region. Its function is as follows. Component of the integrator complex, a multiprotein complex that terminates RNA polymerase II (Pol II) transcription in the promoter-proximal region of genes. The integrator complex provides a quality checkpoint during transcription elongation by driving premature transcription termination of transcripts that are unfavorably configured for transcriptional elongation: the complex terminates transcription by (1) catalyzing dephosphorylation of the C-terminal domain (CTD) of Pol II subunit Polr2A/Rbp1 and Spt5, and (2) degrading the exiting nascent RNA transcript via endonuclease activity. The integrator complex is also involved in the 3'-end processing of the U7 snRNA, and also the spliceosomal snRNAs U1, U2, U4 and U5. Plays a role as a regulator of spermatogenesis. Crucial regulator of the mitotic cell cycle and development. Required for the correct dynein-dynactin perinuclear localization important for nucleus-centrosome coupling that occur upon meiotic progression of primary spermatocytes. Plays a role in sperm motility and fertility. May have a role in the PNG/PLU/GNU pathway. The sequence is that of Protein asunder from Drosophila melanogaster (Fruit fly).